An 843-amino-acid polypeptide reads, in one-letter code: DNA gyrase subunit A (843 aa).

Residues 61–528 enclose the Topo IIA-type catalytic domain; that stretch reads LPDVRDGLKP…ESSTFNAEDL (468 aa). The active-site O-(5'-phospho-DNA)-tyrosine intermediate is the Y149. The GyrA-box motif lies at 555-561; that stretch reads QKRGGKG.

Belongs to the type II topoisomerase GyrA/ParC subunit family. Heterotetramer, composed of two GyrA and two GyrB chains. In the heterotetramer, GyrA contains the active site tyrosine that forms a transient covalent intermediate with DNA, while GyrB binds cofactors and catalyzes ATP hydrolysis.

The protein resides in the cytoplasm. It carries out the reaction ATP-dependent breakage, passage and rejoining of double-stranded DNA.. A type II topoisomerase that negatively supercoils closed circular double-stranded (ds) DNA in an ATP-dependent manner to modulate DNA topology and maintain chromosomes in an underwound state. Negative supercoiling favors strand separation, and DNA replication, transcription, recombination and repair, all of which involve strand separation. Also able to catalyze the interconversion of other topological isomers of dsDNA rings, including catenanes and knotted rings. Type II topoisomerases break and join 2 DNA strands simultaneously in an ATP-dependent manner. The sequence is that of DNA gyrase subunit A from Leptospira biflexa serovar Patoc (strain Patoc 1 / Ames).